Consider the following 615-residue polypeptide: Probable inactive purple acid phosphatase 24 (615 aa).

A signal peptide spans 1–26; it reads MARVLGVLLCLLALFSSSLCLDHANG. 3 N-linked (GlcNAc...) asparagine glycosylation sites follow: Asn129, Asn267, and Asn275. Position 297 (Asp297) interacts with Fe cation. Asn318 carries N-linked (GlcNAc...) asparagine glycosylation. Fe cation contacts are provided by Asp338 and Tyr341. Residue Asp338 coordinates Zn(2+). Zn(2+)-binding residues include Asn371, His460, and His502. Residue Asn371 participates in substrate binding. Substrate is bound at residue 502 to 504; it reads HVH. Position 504 (His504) interacts with Fe cation. An N-linked (GlcNAc...) asparagine glycan is attached at Asn592.

The protein belongs to the metallophosphoesterase superfamily. Purple acid phosphatase family. Homodimer. Requires Fe cation as cofactor. It depends on Zn(2+) as a cofactor. In terms of tissue distribution, specifically expressed in flowers.

The protein localises to the secreted. This chain is Probable inactive purple acid phosphatase 24 (PAP24), found in Arabidopsis thaliana (Mouse-ear cress).